Here is a 603-residue protein sequence, read N- to C-terminus: Complement factor I (603 aa).

The first 18 residues, 1-18 (MKLAHLSLFLLALHLSSS), serve as a signal peptide directing secretion. Intrachain disulfides connect Cys-36–Cys-260, Cys-46–Cys-57, Cys-51–Cys-62, Cys-64–Cys-96, Cys-70–Cys-89, Cys-78–Cys-109, Cys-144–Cys-186, Cys-157–Cys-219, Cys-191–Cys-201, Cys-234–Cys-252, Cys-246–Cys-261, Cys-264–Cys-276, Cys-271–Cys-289, Cys-283–Cys-298, Cys-348–Cys-473, Cys-386–Cys-402, Cys-394–Cys-464, Cys-487–Cys-551, Cys-515–Cys-530, and Cys-541–Cys-570. In terms of domain architecture, Kazal-like spans 58 to 111 (IEGTCICKLPYQCPRAGTPVCAMNGRSYPTYCHQKSFECLHPEIKFSHNGTCAA). Asn-106, Asn-116, Asn-174, and Asn-182 each carry an N-linked (GlcNAc...) asparagine glycan. The 101-residue stretch at 117 to 217 (VSLIYGRTKT…TELSNGLAGV (101 aa)) folds into the SRCR domain. LDL-receptor class A domains follow at residues 218-262 (VCYK…LCCK) and 263-299 (GCRG…SRCE). 6 residues coordinate Ca(2+): Lys-244, Asn-247, Val-249, Asp-251, Asp-257, and Glu-258. A glycan (N-linked (GlcNAc...) asparagine) is linked at Asn-267. Ca(2+) contacts are provided by Tyr-281, Asn-284, Glu-286, Asp-288, Asp-294, and Glu-295. One can recognise a Peptidase S1 domain in the interval 361–594 (VIGGKPANVG…YFDWISYHVG (234 aa)). Active-site charge relay system residues include His-401 and Asp-449. Asn-514 is a glycosylation site (N-linked (GlcNAc...) asparagine). The Charge relay system role is filled by Ser-545. A glycan (N-linked (GlcNAc...) asparagine) is linked at Asn-556.

Belongs to the peptidase S1 family. As to quaternary structure, heterodimer of a light and heavy chains; disulfide-linked. The fully processed and mature protein circulates as a zymogen, and is allosterically activated by substrate-induced remodeling of the active site. Interacts with C3b. Interacts with complement factor H. Expressed in the liver by hepatocytes. Also present in other cells such as monocytes, fibroblasts or keratinocytes.

It localises to the secreted. It is found in the extracellular space. The enzyme catalyses Inactivates complement subcomponents C3b, iC3b and C4b by proteolytic cleavage.. Trypsin-like serine protease that plays an essential role in regulating the immune response by controlling all complement pathways. Inhibits these pathways by cleaving three peptide bonds in the alpha-chain of C3b and two bonds in the alpha-chain of C4b thereby inactivating these proteins. Essential cofactors for these reactions include factor H and C4BP in the fluid phase and membrane cofactor protein/CD46 and CR1 on cell surfaces. The presence of these cofactors on healthy cells allows degradation of deposited C3b by CFI in order to prevent undesired complement activation, while in apoptotic cells or microbes, the absence of such cofactors leads to C3b-mediated complement activation and subsequent opsonization. The sequence is that of Complement factor I (Cfi) from Mus musculus (Mouse).